The sequence spans 623 residues: Prothrombin (623 aa).

A signal peptide spans 1 to 24; it reads MAHVRGLQLPGCLALAALCTLVHS. Positions 25–43 are excised as a propeptide; that stretch reads QHVFLAPQQALSLLQRVRR. The Gla domain occupies 44-90; sequence ANSVFLEEVRKGNLERECVEETCSYEEAFEALESSTATDVFWAKYTA. Residues E50, E51, E58, E60, E63, E64, E69, E70, E73, and E76 each carry the 4-carboxyglutamate modification. C61 and C66 are joined by a disulfide. 11 disulfides stabilise this stretch: C91–C104, C109–C187, C130–C170, C158–C182, C214–C292, C235–C275, C263–C287, C337–C483, C392–C408, C537–C551, and C565–C595. 2 Kringle domains span residues 108-187 and 213-292; these read NCAE…IPVC and QCVP…LNYC. N122 and N144 each carry an N-linked (GlcNAc...) asparagine glycan. A Peptidase S1 domain is found at 365-619; that stretch reads IVEGSDAEIG…LKKWIQKVID (255 aa). H407 serves as the catalytic Charge relay system. N-linked (GlcNAc...) asparagine glycosylation occurs at N417. The active-site Charge relay system is the D463. A high affinity receptor-binding region which also known as the TP508 peptide region spans residues 552–574; sequence AGYKPDEGKRGDACEGDSGGPFV. Residue S569 is the Charge relay system of the active site.

Belongs to the peptidase S1 family. Heterodimer (named alpha-thrombin) of a light and a heavy chain; disulfide-linked. Forms a heterodimer with SERPINA5. In plasma, interacts (via N-terminus) with alpha-1-microglobulin; this interaction does not prevent the activation of prothrombin to thrombin. In terms of processing, the gamma-carboxyglutamyl residues, which bind calcium ions, result from the carboxylation of glutamyl residues by a microsomal enzyme, the vitamin K-dependent carboxylase. The modified residues are necessary for the calcium-dependent interaction with a negatively charged phospholipid surface, which is essential for the conversion of prothrombin to thrombin. In the penultimate step of the coagulation cascade, prothrombin is converted to thrombin by the prothrombinase complex composed of factor Xa (F10), cofactor Va (F5), and phospholipids. This activation requires factor Xa-catalyzed sequential cleavage at 2 sites, Arg-315 and Arg-364, along 2 possible pathways. In the first pathway, the first cleavage occurs at Arg-315, leading to the formation of the inactive intermediate prethrombin-2. This pathway preferentially occurs on platelets and in the absence of cofactor Va. In the second pathway, the first cleavage occurs at Arg-364, which separates protease domain into 2 chains that remain connected through a disulfide bond and generates the active intermediate meizothrombin. The presence of cofactor Va directs activation along the meizothrombin pathway and greatly accelerates the rate of cleavage at Arg-364, but has a smaller effect on the cleavage of meizothrombin at Arg-315. Meizothrombin accumulates as an intermediate when prothrombinase is assembled on the membrane of red blood cells.

The enzyme catalyses Selective cleavage of Arg-|-Gly bonds in fibrinogen to form fibrin and release fibrinopeptides A and B.. Its activity is regulated as follows. Activity is promoted in the presence of negatively charged surfaces, such as polyphosphate and dextran sulfate. Inhibited by SERPINA5. Thrombin, which cleaves bonds after Arg and Lys, converts fibrinogen to fibrin and activates factors V, VII, VIII, XIII, and, in complex with thrombomodulin, protein C. Functions in blood homeostasis, inflammation and wound healing. Activates coagulation factor XI (F11); activation is promoted by the contact with negatively charged surfaces. Triggers the production of pro-inflammatory cytokines, such as MCP-1/CCL2 and IL8/CXCL8, in endothelial cells. This chain is Prothrombin (F2), found in Pongo abelii (Sumatran orangutan).